We begin with the raw amino-acid sequence, 535 residues long: Prolyl 4-hydroxylase subunit alpha-2 (535 aa).

Residues 1–21 (MKLWVSALLMAWFGVLSCVQA) form the signal peptide. The N-linked (GlcNAc...) asparagine glycan is linked to Asn115. The TPR repeat unit spans residues 207 to 240 (SQVLDYLSYAVFQLGDLHRALELTRRLLSLDPSH). N-linked (GlcNAc...) asparagine glycosylation occurs at Asn264. In terms of domain architecture, Fe2OG dioxygenase spans 412–520 (TAELLQVANY…KWVSNKWFHE (109 aa)). Positions 430 and 432 each coordinate Fe cation. Residue Lys480 is modified to N6-succinyllysine. Position 501 (His501) interacts with Fe cation. 2-oxoglutarate is bound at residue Lys511.

It belongs to the P4HA family. Heterotetramer of two alpha-2 chains and two beta chains (P4HB) (the beta chain is the multi-functional PDI), where P4HB plays the role of a structural subunit; this tetramer catalyzes the formation of 4-hydroxyproline in collagen. Requires Fe(2+) as cofactor. It depends on L-ascorbate as a cofactor. In terms of tissue distribution, expressed in the heart, placenta, lung and pancreas.

The protein localises to the endoplasmic reticulum lumen. The catalysed reaction is L-prolyl-[collagen] + 2-oxoglutarate + O2 = trans-4-hydroxy-L-prolyl-[collagen] + succinate + CO2. Its activity is regulated as follows. Inhibited by poly(L-proline) only at very high concentrations. Its function is as follows. Catalyzes the post-translational formation of 4-hydroxyproline in -Xaa-Pro-Gly- sequences in collagens and other proteins. The sequence is that of Prolyl 4-hydroxylase subunit alpha-2 (P4HA2) from Homo sapiens (Human).